Reading from the N-terminus, the 336-residue chain is Succinylglutamate desuccinylase (336 aa).

Zn(2+) contacts are provided by H59, E62, and H151. The active site involves E215.

Belongs to the AspA/AstE family. Succinylglutamate desuccinylase subfamily. It depends on Zn(2+) as a cofactor.

It carries out the reaction N-succinyl-L-glutamate + H2O = L-glutamate + succinate. It participates in amino-acid degradation; L-arginine degradation via AST pathway; L-glutamate and succinate from L-arginine: step 5/5. Its function is as follows. Transforms N(2)-succinylglutamate into succinate and glutamate. In Pseudomonas fluorescens (strain ATCC BAA-477 / NRRL B-23932 / Pf-5), this protein is Succinylglutamate desuccinylase.